The following is a 934-amino-acid chain: Serine/threonine-protein kinase PknD (934 aa).

Residues 4-296 (YELIRLIGKG…ELRQALQPYL (293 aa)) enclose the Protein kinase domain. ATP-binding positions include 10-18 (IGKGGMGEV) and lysine 33. The Proton acceptor role is filled by aspartate 138.

Belongs to the protein kinase superfamily. Ser/Thr protein kinase family. Interacts with Pkn1. Autophosphorylated on serine and threonine residues. Present in elementary bodies 40 hours post-infection as 2 bands of approximately 55 to 60 and 45 to 50 kDa, which may be due to differential phosphorylation as well as degradation; an enzymatically active full-length protein can also be detected.

It carries out the reaction L-seryl-[protein] + ATP = O-phospho-L-seryl-[protein] + ADP + H(+). It catalyses the reaction L-threonyl-[protein] + ATP = O-phospho-L-threonyl-[protein] + ADP + H(+). Together with the serine/threonine kinase Pkn1, may play a role in the specific interactions with host proteins during intracellular growth. Autophosphorylates and also phosphorylates Pkn1. The sequence is that of Serine/threonine-protein kinase PknD from Chlamydia trachomatis serovar L2 (strain ATCC VR-902B / DSM 19102 / 434/Bu).